The chain runs to 955 residues: Mediator of RNA polymerase II transcription subunit 16 (955 aa).

The interval Ala-855 to Gln-874 is disordered. The segment covering Pro-857–Thr-873 has biased composition (polar residues).

This sequence belongs to the Mediator complex subunit 16 family. As to quaternary structure, component of the Mediator complex.

The protein resides in the nucleus. Functionally, component of the Mediator complex, a coactivator involved in the regulated transcription of nearly all RNA polymerase II-dependent genes. Mediator functions as a bridge to convey information from gene-specific regulatory proteins to the basal RNA polymerase II transcription machinery. Mediator is recruited to promoters by direct interactions with regulatory proteins and serves as a scaffold for the assembly of a functional preinitiation complex with RNA polymerase II and the general transcription factors. The polypeptide is Mediator of RNA polymerase II transcription subunit 16 (sin4) (Aspergillus fumigatus (strain ATCC MYA-4609 / CBS 101355 / FGSC A1100 / Af293) (Neosartorya fumigata)).